A 404-amino-acid polypeptide reads, in one-letter code: Probable tRNA sulfurtransferase (404 aa).

In terms of domain architecture, THUMP spans 60-165 (QPIVEALKLV…DEAAYISYEE (106 aa)). ATP-binding positions include 183 to 184 (ML), 208 to 209 (HF), R265, G287, and Q296.

It belongs to the ThiI family.

It is found in the cytoplasm. It carries out the reaction [ThiI sulfur-carrier protein]-S-sulfanyl-L-cysteine + a uridine in tRNA + 2 reduced [2Fe-2S]-[ferredoxin] + ATP + H(+) = [ThiI sulfur-carrier protein]-L-cysteine + a 4-thiouridine in tRNA + 2 oxidized [2Fe-2S]-[ferredoxin] + AMP + diphosphate. The enzyme catalyses [ThiS sulfur-carrier protein]-C-terminal Gly-Gly-AMP + S-sulfanyl-L-cysteinyl-[cysteine desulfurase] + AH2 = [ThiS sulfur-carrier protein]-C-terminal-Gly-aminoethanethioate + L-cysteinyl-[cysteine desulfurase] + A + AMP + 2 H(+). Its pathway is cofactor biosynthesis; thiamine diphosphate biosynthesis. Functionally, catalyzes the ATP-dependent transfer of a sulfur to tRNA to produce 4-thiouridine in position 8 of tRNAs, which functions as a near-UV photosensor. Also catalyzes the transfer of sulfur to the sulfur carrier protein ThiS, forming ThiS-thiocarboxylate. This is a step in the synthesis of thiazole, in the thiamine biosynthesis pathway. The sulfur is donated as persulfide by IscS. This Streptococcus pyogenes serotype M49 (strain NZ131) protein is Probable tRNA sulfurtransferase.